A 139-amino-acid chain; its full sequence is FAD synthase (139 aa).

ATP contacts are provided by residues 9 to 10 (TF), 14 to 17 (HPGH), and Asp92.

It belongs to the archaeal FAD synthase family. As to quaternary structure, homodimer. It depends on a divalent metal cation as a cofactor.

It catalyses the reaction FMN + ATP + H(+) = FAD + diphosphate. It participates in cofactor biosynthesis; FAD biosynthesis; FAD from FMN: step 1/1. Functionally, catalyzes the transfer of the AMP portion of ATP to flavin mononucleotide (FMN) to produce flavin adenine dinucleotide (FAD) coenzyme. The protein is FAD synthase of Methanosarcina barkeri (strain Fusaro / DSM 804).